The sequence spans 413 residues: Multifunctional CCA protein (413 aa).

Gly-8 and Arg-11 together coordinate ATP. CTP is bound by residues Gly-8 and Arg-11. 2 residues coordinate Mg(2+): Asp-21 and Asp-23. Residues Arg-91, Arg-137, and Arg-140 each contribute to the ATP site. CTP contacts are provided by Arg-91, Arg-137, and Arg-140. The HD domain occupies 228 to 329 (TGKHTLLSLK…VSLFDKGDFW (102 aa)).

It belongs to the tRNA nucleotidyltransferase/poly(A) polymerase family. Bacterial CCA-adding enzyme type 1 subfamily. As to quaternary structure, monomer. Can also form homodimers and oligomers. Mg(2+) serves as cofactor. It depends on Ni(2+) as a cofactor.

It carries out the reaction a tRNA precursor + 2 CTP + ATP = a tRNA with a 3' CCA end + 3 diphosphate. It catalyses the reaction a tRNA with a 3' CCA end + 2 CTP + ATP = a tRNA with a 3' CCACCA end + 3 diphosphate. Functionally, catalyzes the addition and repair of the essential 3'-terminal CCA sequence in tRNAs without using a nucleic acid template. Adds these three nucleotides in the order of C, C, and A to the tRNA nucleotide-73, using CTP and ATP as substrates and producing inorganic pyrophosphate. tRNA 3'-terminal CCA addition is required both for tRNA processing and repair. Also involved in tRNA surveillance by mediating tandem CCA addition to generate a CCACCA at the 3' terminus of unstable tRNAs. While stable tRNAs receive only 3'-terminal CCA, unstable tRNAs are marked with CCACCA and rapidly degraded. The sequence is that of Multifunctional CCA protein from Shewanella denitrificans (strain OS217 / ATCC BAA-1090 / DSM 15013).